Here is a 189-residue protein sequence, read N- to C-terminus: MEHKDNSTMYGTTILCIRRGNKVIIAGDGQVSLGHTVIKNSAKKIKRLANDTVITGFAGATADAFTLFERLESKLEKHPGQLLRACVELAKDWRMDRYLRRLEAMMIVADKSVSLIISGNGDVLEPENGIAAIGSGGNYALAAAKALCESNDQFSQNMTLEYIITTAMKIASEICIYTNNNIIMEKIED.

Thr-12 is an active-site residue. Na(+) is bound by residues Ser-172, Cys-175, and Thr-178.

The protein belongs to the peptidase T1B family. HslV subfamily. A double ring-shaped homohexamer of HslV is capped on each side by a ring-shaped HslU homohexamer. The assembly of the HslU/HslV complex is dependent on binding of ATP.

It localises to the cytoplasm. The catalysed reaction is ATP-dependent cleavage of peptide bonds with broad specificity.. Allosterically activated by HslU binding. Protease subunit of a proteasome-like degradation complex believed to be a general protein degrading machinery. The sequence is that of ATP-dependent protease subunit HslV from Ehrlichia chaffeensis (strain ATCC CRL-10679 / Arkansas).